Consider the following 328-residue polypeptide: L-lactate dehydrogenase (328 aa).

NAD(+) contacts are provided by residues Val-18, Glu-39, Lys-46, Tyr-71, and 85–86 (GA). The substrate site is built by Gln-88 and Arg-94. NAD(+) contacts are provided by residues Ser-107, 124–126 (AAN), and Ser-149. A substrate-binding site is contributed by 126–129 (NPVD). Residue 154–157 (DSAR) participates in substrate binding. Positions 159 and 174 each coordinate beta-D-fructose 1,6-bisphosphate. The active-site Proton acceptor is the His-181. The residue at position 226 (Tyr-226) is a Phosphotyrosine. Thr-235 lines the substrate pocket.

It belongs to the LDH/MDH superfamily. LDH family. In terms of assembly, homotetramer.

The protein localises to the cytoplasm. The catalysed reaction is (S)-lactate + NAD(+) = pyruvate + NADH + H(+). Its pathway is fermentation; pyruvate fermentation to lactate; (S)-lactate from pyruvate: step 1/1. Allosterically activated by fructose 1,6-bisphosphate (FBP). Catalyzes the conversion of lactate to pyruvate. The polypeptide is L-lactate dehydrogenase (Streptococcus thermophilus (strain CNRZ 1066)).